A 343-amino-acid chain; its full sequence is N-acetyl-gamma-glutamyl-phosphate reductase (343 aa).

Residue Cys-146 is part of the active site.

This sequence belongs to the NAGSA dehydrogenase family. Type 1 subfamily.

The protein localises to the cytoplasm. It catalyses the reaction N-acetyl-L-glutamate 5-semialdehyde + phosphate + NADP(+) = N-acetyl-L-glutamyl 5-phosphate + NADPH + H(+). Its pathway is amino-acid biosynthesis; L-arginine biosynthesis; N(2)-acetyl-L-ornithine from L-glutamate: step 3/4. Functionally, catalyzes the NADPH-dependent reduction of N-acetyl-5-glutamyl phosphate to yield N-acetyl-L-glutamate 5-semialdehyde. This chain is N-acetyl-gamma-glutamyl-phosphate reductase, found in Paenarthrobacter aurescens (strain TC1).